The sequence spans 268 residues: Ribosomal RNA small subunit methyltransferase A (268 aa).

6 residues coordinate S-adenosyl-L-methionine: N21, L23, G48, E69, D94, and N115.

Belongs to the class I-like SAM-binding methyltransferase superfamily. rRNA adenine N(6)-methyltransferase family. RsmA subfamily.

The protein localises to the cytoplasm. The enzyme catalyses adenosine(1518)/adenosine(1519) in 16S rRNA + 4 S-adenosyl-L-methionine = N(6)-dimethyladenosine(1518)/N(6)-dimethyladenosine(1519) in 16S rRNA + 4 S-adenosyl-L-homocysteine + 4 H(+). Functionally, specifically dimethylates two adjacent adenosines (A1518 and A1519) in the loop of a conserved hairpin near the 3'-end of 16S rRNA in the 30S particle. May play a critical role in biogenesis of 30S subunits. This is Ribosomal RNA small subunit methyltransferase A from Saccharophagus degradans (strain 2-40 / ATCC 43961 / DSM 17024).